The chain runs to 142 residues: Phosphoribosyl-AMP cyclohydrolase (142 aa).

Asp-92 lines the Mg(2+) pocket. Cys-93 provides a ligand contact to Zn(2+). Positions 94 and 96 each coordinate Mg(2+). Zn(2+) is bound by residues Cys-109 and Cys-116.

This sequence belongs to the PRA-CH family. As to quaternary structure, homodimer. Mg(2+) serves as cofactor. The cofactor is Zn(2+).

The protein localises to the cytoplasm. It carries out the reaction 1-(5-phospho-beta-D-ribosyl)-5'-AMP + H2O = 1-(5-phospho-beta-D-ribosyl)-5-[(5-phospho-beta-D-ribosylamino)methylideneamino]imidazole-4-carboxamide. It participates in amino-acid biosynthesis; L-histidine biosynthesis; L-histidine from 5-phospho-alpha-D-ribose 1-diphosphate: step 3/9. In terms of biological role, catalyzes the hydrolysis of the adenine ring of phosphoribosyl-AMP. This is Phosphoribosyl-AMP cyclohydrolase from Alkalilimnicola ehrlichii (strain ATCC BAA-1101 / DSM 17681 / MLHE-1).